A 1358-amino-acid polypeptide reads, in one-letter code: DNA-directed RNA polymerase subunit beta (1358 aa).

Belongs to the RNA polymerase beta chain family. In terms of assembly, the RNAP catalytic core consists of 2 alpha, 1 beta, 1 beta' and 1 omega subunit. When a sigma factor is associated with the core the holoenzyme is formed, which can initiate transcription.

It carries out the reaction RNA(n) + a ribonucleoside 5'-triphosphate = RNA(n+1) + diphosphate. DNA-dependent RNA polymerase catalyzes the transcription of DNA into RNA using the four ribonucleoside triphosphates as substrates. This chain is DNA-directed RNA polymerase subunit beta, found in Francisella tularensis subsp. mediasiatica (strain FSC147).